The chain runs to 342 residues: MKFLDEAKVYVRSGDGGPGCVSFRREKFIEFGGPNGGDGGRGGDVWVECVEGLNTLIDYRYQQHFKAKKGEHGMGSNCHGANGADTVLKVPAGTQIFSEDGETLLADLTEVGQKIRLAKGGNGGFGNAYFTTSTNRAPKHANPGQEGQEMWIWLRLKLIADAGLVGLPNAGKSTFLASVTAAKPKIADYPFTTLHPGLGVVRSDGREFVLADIPGLIEGAHEGVGLGDKFLAHVERCRVLLHLVDGTSEHAGKTYKLVRGEIEAYGNGLAEKPEIVALSKADALDADTLKSQVAKLKRAAGRAPLILSSASRKGVPEALRALQTEIDASAEAERKPVAAWQP.

The Obg domain maps to 1–159 (MKFLDEAKVY…MWIWLRLKLI (159 aa)). The 168-residue stretch at 160-327 (ADAGLVGLPN…ALRALQTEID (168 aa)) folds into the OBG-type G domain. Residues 166–173 (GLPNAGKS), 191–195 (FTTLH), 212–215 (DIPG), 279–282 (SKAD), and 308–310 (SSA) each bind GTP. Mg(2+) is bound by residues S173 and T193.

This sequence belongs to the TRAFAC class OBG-HflX-like GTPase superfamily. OBG GTPase family. Monomer. It depends on Mg(2+) as a cofactor.

It localises to the cytoplasm. Its function is as follows. An essential GTPase which binds GTP, GDP and possibly (p)ppGpp with moderate affinity, with high nucleotide exchange rates and a fairly low GTP hydrolysis rate. Plays a role in control of the cell cycle, stress response, ribosome biogenesis and in those bacteria that undergo differentiation, in morphogenesis control. The protein is GTPase Obg of Methylobacterium radiotolerans (strain ATCC 27329 / DSM 1819 / JCM 2831 / NBRC 15690 / NCIMB 10815 / 0-1).